The following is a 589-amino-acid chain: Peroxisomal biogenesis factor 8 (589 aa).

A Microbody targeting signal motif is present at residues 587–589; it reads SKL.

The protein resides in the peroxisome matrix. Required for peroxisome assembly. In Saccharomyces cerevisiae (strain ATCC 204508 / S288c) (Baker's yeast), this protein is Peroxisomal biogenesis factor 8 (PEX8).